The primary structure comprises 129 residues: Small ribosomal subunit protein uS11 (129 aa).

This sequence belongs to the universal ribosomal protein uS11 family. As to quaternary structure, part of the 30S ribosomal subunit. Interacts with proteins S7 and S18. Binds to IF-3.

Functionally, located on the platform of the 30S subunit, it bridges several disparate RNA helices of the 16S rRNA. Forms part of the Shine-Dalgarno cleft in the 70S ribosome. This is Small ribosomal subunit protein uS11 from Pasteurella multocida (strain Pm70).